The following is a 374-amino-acid chain: tRNA-specific 2-thiouridylase MnmA (374 aa).

Residues 12-19 and Met38 each bind ATP; that span reads GMSGGVDS. The interaction with target base in tRNA stretch occupies residues 98-100; the sequence is NPD. Cys103 functions as the Nucleophile in the catalytic mechanism. Cysteines 103 and 202 form a disulfide. Gly128 serves as a coordination point for ATP. The interaction with tRNA stretch occupies residues 152–154; sequence KDQ. Catalysis depends on Cys202, which acts as the Cysteine persulfide intermediate. The segment at 316-317 is interaction with tRNA; the sequence is RY.

It belongs to the MnmA/TRMU family.

The protein localises to the cytoplasm. The enzyme catalyses S-sulfanyl-L-cysteinyl-[protein] + uridine(34) in tRNA + AH2 + ATP = 2-thiouridine(34) in tRNA + L-cysteinyl-[protein] + A + AMP + diphosphate + H(+). Functionally, catalyzes the 2-thiolation of uridine at the wobble position (U34) of tRNA, leading to the formation of s(2)U34. This chain is tRNA-specific 2-thiouridylase MnmA, found in Vibrio parahaemolyticus serotype O3:K6 (strain RIMD 2210633).